The chain runs to 436 residues: tRNA-2-methylthio-N(6)-dimethylallyladenosine synthase (436 aa).

Positions 1–115 (MRVFFKTYGC…IAEVLQKAAR (115 aa)) constitute an MTTase N-terminal domain. Cysteine 10, cysteine 46, cysteine 80, cysteine 151, cysteine 155, and cysteine 158 together coordinate [4Fe-4S] cluster. One can recognise a Radical SAM core domain in the interval 137-368 (RFSKHHAWIT…LELQKQINRE (232 aa)). A TRAM domain is found at 371 to 432 (MQYLGKVVEI…AGPLYGKLQK (62 aa)).

It belongs to the methylthiotransferase family. MiaB subfamily. Monomer. The cofactor is [4Fe-4S] cluster.

Its subcellular location is the cytoplasm. It carries out the reaction N(6)-dimethylallyladenosine(37) in tRNA + (sulfur carrier)-SH + AH2 + 2 S-adenosyl-L-methionine = 2-methylsulfanyl-N(6)-dimethylallyladenosine(37) in tRNA + (sulfur carrier)-H + 5'-deoxyadenosine + L-methionine + A + S-adenosyl-L-homocysteine + 2 H(+). In terms of biological role, catalyzes the methylthiolation of N6-(dimethylallyl)adenosine (i(6)A), leading to the formation of 2-methylthio-N6-(dimethylallyl)adenosine (ms(2)i(6)A) at position 37 in tRNAs that read codons beginning with uridine. The sequence is that of tRNA-2-methylthio-N(6)-dimethylallyladenosine synthase from Pseudothermotoga lettingae (strain ATCC BAA-301 / DSM 14385 / NBRC 107922 / TMO) (Thermotoga lettingae).